We begin with the raw amino-acid sequence, 253 residues long: Triosephosphate isomerase (253 aa).

8 to 10 (NWK) contacts substrate. The active-site Electrophile is the histidine 93. The active-site Proton acceptor is the glutamate 165. Residues glycine 171, serine 210, and 231–232 (GG) contribute to the substrate site.

Belongs to the triosephosphate isomerase family. As to quaternary structure, homodimer.

It is found in the cytoplasm. It carries out the reaction D-glyceraldehyde 3-phosphate = dihydroxyacetone phosphate. It participates in carbohydrate biosynthesis; gluconeogenesis. The protein operates within carbohydrate degradation; glycolysis; D-glyceraldehyde 3-phosphate from glycerone phosphate: step 1/1. Functionally, involved in the gluconeogenesis. Catalyzes stereospecifically the conversion of dihydroxyacetone phosphate (DHAP) to D-glyceraldehyde-3-phosphate (G3P). The sequence is that of Triosephosphate isomerase from Francisella philomiragia subsp. philomiragia (strain ATCC 25017 / CCUG 19701 / FSC 153 / O#319-036).